A 327-amino-acid polypeptide reads, in one-letter code: Transaldolase (327 aa).

Residue Lys-132 is the Schiff-base intermediate with substrate of the active site.

It belongs to the transaldolase family. Type 1 subfamily.

It is found in the cytoplasm. It carries out the reaction D-sedoheptulose 7-phosphate + D-glyceraldehyde 3-phosphate = D-erythrose 4-phosphate + beta-D-fructose 6-phosphate. It functions in the pathway carbohydrate degradation; pentose phosphate pathway; D-glyceraldehyde 3-phosphate and beta-D-fructose 6-phosphate from D-ribose 5-phosphate and D-xylulose 5-phosphate (non-oxidative stage): step 2/3. Functionally, transaldolase is important for the balance of metabolites in the pentose-phosphate pathway. This is Transaldolase from Chlamydia trachomatis serovar D (strain ATCC VR-885 / DSM 19411 / UW-3/Cx).